We begin with the raw amino-acid sequence, 231 residues long: MAKLTKRQKAIAEKIEAGKAYNFEEAATLLASLPAAKFVESYDIAVNLGVDPRKSDQVVRSATVLPHGTGKTVRVAVFTQGPAAEAALAAGADRVGMDDLAAEMKGGDLNYDVVIASPDAMRVVGQLGQVLGPRGLMPNPKVGTVTPDVATAVKNAKAGQVRYRTDKNGIIHTSVGKIGFEADKLKENVEALIADLKRIKPASSKGIYVKRVTLSTTMGPGLVIDQSSLNV.

It belongs to the universal ribosomal protein uL1 family. Part of the 50S ribosomal subunit.

Binds directly to 23S rRNA. The L1 stalk is quite mobile in the ribosome, and is involved in E site tRNA release. In terms of biological role, protein L1 is also a translational repressor protein, it controls the translation of the L11 operon by binding to its mRNA. The polypeptide is Large ribosomal subunit protein uL1 (Pseudomonas putida (strain ATCC 700007 / DSM 6899 / JCM 31910 / BCRC 17059 / LMG 24140 / F1)).